The following is a 560-amino-acid chain: Arginine--tRNA ligase (560 aa).

The 'HIGH' region signature appears at 122–132; that stretch reads ANPNGPLHVGH.

This sequence belongs to the class-I aminoacyl-tRNA synthetase family.

It localises to the cytoplasm. The enzyme catalyses tRNA(Arg) + L-arginine + ATP = L-arginyl-tRNA(Arg) + AMP + diphosphate. The protein is Arginine--tRNA ligase of Methanosphaera stadtmanae (strain ATCC 43021 / DSM 3091 / JCM 11832 / MCB-3).